A 191-amino-acid chain; its full sequence is uncharacterized protein (191 aa).

Disordered stretches follow at residues 1 to 42 (MSEE…DADA) and 145 to 191 (QNQE…IDLD). Composition is skewed to basic and acidic residues over residues 11-26 (PRPD…RATG) and 147-178 (QERR…RDEG).

As to quaternary structure, it may form a heterotetramer of two glucokinase subunits (glk) with two ORF2 proteins.

Its function is as follows. May be involved in glucose transport or metabolism. This is an uncharacterized protein from Streptomyces coelicolor (strain ATCC BAA-471 / A3(2) / M145).